The following is a 230-amino-acid chain: Increased recombination centers protein 19 (230 aa).

Belongs to the IRC19 family.

Functionally, involved in sporulation and maintenance of the mitochondrial DNA. Is probably involved in a pathway contributing to genomic integrity. The chain is Increased recombination centers protein 19 (IRC19) from Saccharomyces cerevisiae (strain JAY291) (Baker's yeast).